A 526-amino-acid polypeptide reads, in one-letter code: Peptide chain release factor 3 (526 aa).

Residues 8-277 (NKRRTFAIIS…GLTEWAPKPQ (270 aa)) enclose the tr-type G domain. GTP contacts are provided by residues 17–24 (SHPDAGKT), 85–89 (DTPGH), and 139–142 (NKLD).

Belongs to the TRAFAC class translation factor GTPase superfamily. Classic translation factor GTPase family. PrfC subfamily.

It localises to the cytoplasm. Functionally, increases the formation of ribosomal termination complexes and stimulates activities of RF-1 and RF-2. It binds guanine nucleotides and has strong preference for UGA stop codons. It may interact directly with the ribosome. The stimulation of RF-1 and RF-2 is significantly reduced by GTP and GDP, but not by GMP. This chain is Peptide chain release factor 3, found in Actinobacillus pleuropneumoniae serotype 5b (strain L20).